Reading from the N-terminus, the 89-residue chain is Small ribosomal subunit protein uS15 (89 aa).

It belongs to the universal ribosomal protein uS15 family. Part of the 30S ribosomal subunit. Forms a bridge to the 50S subunit in the 70S ribosome, contacting the 23S rRNA.

One of the primary rRNA binding proteins, it binds directly to 16S rRNA where it helps nucleate assembly of the platform of the 30S subunit by binding and bridging several RNA helices of the 16S rRNA. In terms of biological role, forms an intersubunit bridge (bridge B4) with the 23S rRNA of the 50S subunit in the ribosome. This Buchnera aphidicola subsp. Baizongia pistaciae (strain Bp) protein is Small ribosomal subunit protein uS15.